Here is a 213-residue protein sequence, read N- to C-terminus: Kynurenine formamidase (213 aa).

W18 is a binding site for substrate. Residues H48, H52, and D54 each coordinate Zn(2+). The active-site Proton donor/acceptor is the H58. Residues H160 and E172 each contribute to the Zn(2+) site.

It belongs to the Cyclase 1 superfamily. KynB family. As to quaternary structure, homodimer. The cofactor is Zn(2+).

It carries out the reaction N-formyl-L-kynurenine + H2O = L-kynurenine + formate + H(+). Its pathway is amino-acid degradation; L-tryptophan degradation via kynurenine pathway; L-kynurenine from L-tryptophan: step 2/2. Its function is as follows. Catalyzes the hydrolysis of N-formyl-L-kynurenine to L-kynurenine, the second step in the kynurenine pathway of tryptophan degradation. This Burkholderia vietnamiensis (strain G4 / LMG 22486) (Burkholderia cepacia (strain R1808)) protein is Kynurenine formamidase.